Reading from the N-terminus, the 44-residue chain is M-factor (44 aa).

Positions 1-32 (MDSIATNTHSSSIVNAYNNNPTDVVKTQNIKN) are excised as a propeptide. Position 41 is a cysteine methyl ester (Cys41). A lipid anchor (S-farnesyl cysteine) is attached at Cys41. Residues 42–44 (VIA) constitute a propeptide, removed in mature form.

It is found in the secreted. Functionally, M-factor is a mating pheromone produced by M-type mating cells. All three mfm genes contribute to the production of M-factor. This chain is M-factor (mfm2), found in Schizosaccharomyces pombe (strain 972 / ATCC 24843) (Fission yeast).